Here is a 286-residue protein sequence, read N- to C-terminus: 4-hydroxy-3-methylbut-2-enyl diphosphate reductase (286 aa).

Cysteine 12 contributes to the [4Fe-4S] cluster binding site. Histidine 46 and histidine 79 together coordinate (2E)-4-hydroxy-3-methylbut-2-enyl diphosphate. Dimethylallyl diphosphate is bound by residues histidine 46 and histidine 79. Positions 46 and 79 each coordinate isopentenyl diphosphate. Residue cysteine 101 coordinates [4Fe-4S] cluster. A (2E)-4-hydroxy-3-methylbut-2-enyl diphosphate-binding site is contributed by histidine 129. Histidine 129 contacts dimethylallyl diphosphate. Residue histidine 129 coordinates isopentenyl diphosphate. Catalysis depends on glutamate 131, which acts as the Proton donor. Threonine 169 contributes to the (2E)-4-hydroxy-3-methylbut-2-enyl diphosphate binding site. Cysteine 198 provides a ligand contact to [4Fe-4S] cluster. 3 residues coordinate (2E)-4-hydroxy-3-methylbut-2-enyl diphosphate: serine 226, asparagine 228, and serine 270. Residues serine 226, asparagine 228, and serine 270 each contribute to the dimethylallyl diphosphate site. Isopentenyl diphosphate-binding residues include serine 226, asparagine 228, and serine 270.

The protein belongs to the IspH family. [4Fe-4S] cluster is required as a cofactor.

The catalysed reaction is isopentenyl diphosphate + 2 oxidized [2Fe-2S]-[ferredoxin] + H2O = (2E)-4-hydroxy-3-methylbut-2-enyl diphosphate + 2 reduced [2Fe-2S]-[ferredoxin] + 2 H(+). The enzyme catalyses dimethylallyl diphosphate + 2 oxidized [2Fe-2S]-[ferredoxin] + H2O = (2E)-4-hydroxy-3-methylbut-2-enyl diphosphate + 2 reduced [2Fe-2S]-[ferredoxin] + 2 H(+). It functions in the pathway isoprenoid biosynthesis; dimethylallyl diphosphate biosynthesis; dimethylallyl diphosphate from (2E)-4-hydroxy-3-methylbutenyl diphosphate: step 1/1. Its pathway is isoprenoid biosynthesis; isopentenyl diphosphate biosynthesis via DXP pathway; isopentenyl diphosphate from 1-deoxy-D-xylulose 5-phosphate: step 6/6. Its function is as follows. Catalyzes the conversion of 1-hydroxy-2-methyl-2-(E)-butenyl 4-diphosphate (HMBPP) into a mixture of isopentenyl diphosphate (IPP) and dimethylallyl diphosphate (DMAPP). Acts in the terminal step of the DOXP/MEP pathway for isoprenoid precursor biosynthesis. The protein is 4-hydroxy-3-methylbut-2-enyl diphosphate reductase of Solidesulfovibrio magneticus (strain ATCC 700980 / DSM 13731 / RS-1) (Desulfovibrio magneticus).